Reading from the N-terminus, the 598-residue chain is Elongation factor 4 (598 aa).

Positions 2–184 (KQIRNFSIIA…RLVKEIPAPE (183 aa)) constitute a tr-type G domain. Residues 14–19 (DHGKST) and 131–134 (NKID) contribute to the GTP site.

The protein belongs to the TRAFAC class translation factor GTPase superfamily. Classic translation factor GTPase family. LepA subfamily.

The protein resides in the cell inner membrane. It carries out the reaction GTP + H2O = GDP + phosphate + H(+). In terms of biological role, required for accurate and efficient protein synthesis under certain stress conditions. May act as a fidelity factor of the translation reaction, by catalyzing a one-codon backward translocation of tRNAs on improperly translocated ribosomes. Back-translocation proceeds from a post-translocation (POST) complex to a pre-translocation (PRE) complex, thus giving elongation factor G a second chance to translocate the tRNAs correctly. Binds to ribosomes in a GTP-dependent manner. The polypeptide is Elongation factor 4 (Photorhabdus laumondii subsp. laumondii (strain DSM 15139 / CIP 105565 / TT01) (Photorhabdus luminescens subsp. laumondii)).